Reading from the N-terminus, the 789-residue chain is MSLQLSNSLFFARKESHFRCFSHVSASLDTGVRRVTSAKIASTCFEETKERIADLIHKAELSVSTYDTAWVAMVPSPNSSQEPCFPDCLSWLLQNQCCDGSWACPHHHPLLKKDVLCSTLACVLALKKWGVGEEKINRGVHFIEHNFASAMEKCQISPMGFDIIFPAMLDYARDLLLNLRLEPTMLNDLIYKRGLELKRNQNHSAEREAYLAYVAEGMGKLQDLGSVMKHQRRNGSLFNSPSTTAAAFIAFPNSRCLTYLRSALKKFGSAVPAVYPLDIYLQLCTVDNLERLGISRYFQKEIQGVLDETYRCWLQGNEEIFMDAPTCALAFRVLRKNGYNVTSDPITKLLEECFSSSFCGNIKDINTTLGLYRASEFILYPDERDLEKQNLMLKNLLEQELSSDFIHSSQLGRNIDAEVKHALEYPFYADLDRIVNRRNIEHYNFDNTRILKTSYCSPNFGNKDFLFLSVKDYNECQAIHREELRELERWVIENRLDELRFARQKCAYCYFSAAATLFAPELSNARMSWAKNGVLTTVVDDFFDLGGSVEELKNLIQLVELWDVDVSTECSSQNVQIIFSALKCTICDIGDKGSKLQERSITNHIIDIWLDLLYSMMKETEWARDKYIPTMDEYISNAYVSFALGPIVLPALYLVGPKLSEEMVHHSEYHNLYKLMSTCGRLLNDIRGCERELKEGKLNAIPLYIINNGGEITKEAAASEMKSLIETHRRELLRLVLEGKNSVLPKSCKELFWHMSKVLHLFYSKDDGFTSQDLIKVVKAVIYEPIVLK.

Residues D540 and D544 each contribute to the Mg(2+) site. A DDXXD motif motif is present at residues 540-544; the sequence is DDFFD. A helical membrane pass occupies residues 638–656; sequence AYVSFALGPIVLPALYLVG. N684, R687, and E692 together coordinate Mg(2+).

This sequence belongs to the terpene synthase family. Requires Mg(2+) as cofactor. In terms of tissue distribution, expressed in leaves and fruits, including trichomes.

It is found in the plastid. Its subcellular location is the chloroplast membrane. It carries out the reaction ent-copalyl diphosphate = ent-kaur-16-ene + diphosphate. Its pathway is plant hormone biosynthesis; gibberellin biosynthesis. In terms of biological role, involved in the biosynthesis of labdane-type diterpenoid including cleroda-dienols, and peregrinol lactones and furan derivatives, dopaminergic diterpenoids that can bind to dopamine receptors in the human pituitary gland, have probably ability to lower prolactin levels, and are used to treat menstrual cycle disorders (e.g. premenstrual syndrome and mastodynia). Terpene synthase that produces ent-kaurene from ent-copalyl diphosphate. The sequence is that of Ent-kaurene synthase TSP4, chloroplastic from Vitex agnus-castus (Chaste tree).